The sequence spans 306 residues: Porphobilinogen deaminase (306 aa).

C239 is modified (S-(dipyrrolylmethanemethyl)cysteine).

Belongs to the HMBS family. In terms of assembly, monomer. It depends on dipyrromethane as a cofactor.

It carries out the reaction 4 porphobilinogen + H2O = hydroxymethylbilane + 4 NH4(+). Its pathway is porphyrin-containing compound metabolism; protoporphyrin-IX biosynthesis; coproporphyrinogen-III from 5-aminolevulinate: step 2/4. Tetrapolymerization of the monopyrrole PBG into the hydroxymethylbilane pre-uroporphyrinogen in several discrete steps. The chain is Porphobilinogen deaminase (hemC) from Helicobacter pylori (strain ATCC 700392 / 26695) (Campylobacter pylori).